The sequence spans 569 residues: Formate--tetrahydrofolate ligase (569 aa).

64-71 (TPHGEGKT) serves as a coordination point for ATP.

This sequence belongs to the formate--tetrahydrofolate ligase family.

The enzyme catalyses (6S)-5,6,7,8-tetrahydrofolate + formate + ATP = (6R)-10-formyltetrahydrofolate + ADP + phosphate. It participates in one-carbon metabolism; tetrahydrofolate interconversion. This is Formate--tetrahydrofolate ligase from Shewanella sp. (strain MR-7).